Consider the following 36-residue polypeptide: Neuropeptide F (36 aa).

The residue at position 36 (Phe-36) is a Phenylalanine amide.

This sequence belongs to the NPY family. In terms of tissue distribution, central and peripheral nervous system, and muscular pharynx.

It is found in the secreted. May perform an important neurotransmitter function and may regulate muscular activity. This chain is Neuropeptide F, found in Arthurdendyus triangulatus (New Zealand flatworm).